The sequence spans 236 residues: MGPGFQDAYHAFHTAQDERQLFRQIASVVRQLGFDYCCYGIRVPLPVSKPAVAIFDTYPAGWMEHYQASGFLEIDPTVRTGASSSDLIIWPVSIRDEAARLWSDARDFGLNIGVARSSWTAHGAFGLLTLARRADPLTAAELEQLSATTNWLANLAHALMSPFLMPKLVPESSAALTAREREVLCWTGEGKTAYEIGQILRISERTVNFHVNNVLLKLAATNKVQAVVKAIAIGLI.

The HTH luxR-type domain maps to 169-234 (VPESSAALTA…QAVVKAIAIG (66 aa)). A DNA-binding region (H-T-H motif) is located at residues 193–212 (AYEIGQILRISERTVNFHVN).

This sequence belongs to the autoinducer-regulated transcriptional regulatory protein family.

This Ralstonia nicotianae (strain ATCC BAA-1114 / GMI1000) (Ralstonia solanacearum) protein is Transcriptional activator protein SolR (solR).